The following is a 37-amino-acid chain: Large ribosomal subunit protein bL36c (37 aa).

Belongs to the bacterial ribosomal protein bL36 family.

The protein resides in the plastid. Its subcellular location is the chloroplast. This is Large ribosomal subunit protein bL36c from Chara vulgaris (Common stonewort).